A 160-amino-acid chain; its full sequence is Phosphopantetheine adenylyltransferase (160 aa).

Residue S10 participates in substrate binding. Residues 10-11 (SF) and H18 each bind ATP. Residues K42, L74, and R88 each contribute to the substrate site. Residues 89–91 (GLR), E99, and 124–130 (YSFLSSS) each bind ATP.

Belongs to the bacterial CoaD family. Homohexamer. Requires Mg(2+) as cofactor.

It localises to the cytoplasm. The enzyme catalyses (R)-4'-phosphopantetheine + ATP + H(+) = 3'-dephospho-CoA + diphosphate. Its pathway is cofactor biosynthesis; coenzyme A biosynthesis; CoA from (R)-pantothenate: step 4/5. Reversibly transfers an adenylyl group from ATP to 4'-phosphopantetheine, yielding dephospho-CoA (dPCoA) and pyrophosphate. The polypeptide is Phosphopantetheine adenylyltransferase (Bacillus pumilus (strain SAFR-032)).